Reading from the N-terminus, the 845-residue chain is ATP-binding cassette sub-family F member 1 (845 aa).

The tract at residues 1–261 (MPKAPKQQPP…HLSKKEKKKL (261 aa)) is disordered. Serine 22 and serine 24 each carry phosphoserine. Basic residues predominate over residues 29–39 (KKGKKDKKIKK). Positions 47–64 (VEDKQAGEEEKVLKEKEQ) are enriched in basic and acidic residues. Basic residues predominate over residues 73–85 (QKKKRDTRKGRRK). Serine 105 bears the Phosphoserine mark. Threonine 108 carries the phosphothreonine modification. A phosphoserine; by CK2 mark is found at serine 109 and serine 140. The segment covering 147–160 (EKHPPKPAKPEKNR) has biased composition (basic and acidic residues). Serine 166 carries the post-translational modification Phosphoserine. Over residues 206-226 (EIIKEKEPPKQGKEKAKKAEQ) the composition is skewed to basic and acidic residues. The segment covering 227–241 (GSEEEGEGEEEEEEG) has biased composition (acidic residues). A Phosphoserine modification is found at serine 228. Residues 304–548 (IKLEKFSISA…MYQQKQKELL (245 aa)) enclose the ABC transporter 1 domain. An ATP-binding site is contributed by 336–343 (GPNGKGKT). Positions 559 to 580 (KELKAGGKSTKQAEKQTKEALT) are enriched in basic and acidic residues. The segment at 559–602 (KELKAGGKSTKQAEKQTKEALTRKQQKCRRKNQDEESQEAPELL) is disordered. Serine 595 is modified (phosphoserine). In terms of domain architecture, ABC transporter 2 spans 625 to 840 (LGLHGVTFGY…VLEALGEVMV (216 aa)). 658–665 (GPNGVGKS) serves as a coordination point for ATP.

Belongs to the ABC transporter superfamily. ABCF family. EF3 subfamily. Isoform 2 interacts (via N-terminus) with EIF2S1; the interaction is independent of its phosphorylated status. Isoform 2 associates (via both ABC transporter domains) with the ribosomes. In terms of processing, isoform 2 is phosphorylated at phosphoserine and phosphothreonine. Isoform 2 phosphorylation on Ser-109 and Ser-140 by CK2 inhibits association of EIF2 with ribosomes. Ubiquitous.

It is found in the cytoplasm. It localises to the nucleus. The protein resides in the nucleoplasm. The protein localises to the nucleus envelope. Functionally, isoform 2 is required for efficient Cap- and IRES-mediated mRNA translation initiation. Isoform 2 is not involved in the ribosome biogenesis. In Homo sapiens (Human), this protein is ATP-binding cassette sub-family F member 1 (ABCF1).